Here is a 143-residue protein sequence, read N- to C-terminus: 3-dehydroquinate dehydratase (143 aa).

Residue tyrosine 22 is the Proton acceptor of the active site. Substrate-binding residues include asparagine 73, histidine 79, and aspartate 86. The active-site Proton donor is the histidine 99. Residues 100–101 (LS) and arginine 110 contribute to the substrate site.

Belongs to the type-II 3-dehydroquinase family. As to quaternary structure, homododecamer.

It catalyses the reaction 3-dehydroquinate = 3-dehydroshikimate + H2O. Its pathway is metabolic intermediate biosynthesis; chorismate biosynthesis; chorismate from D-erythrose 4-phosphate and phosphoenolpyruvate: step 3/7. Functionally, catalyzes a trans-dehydration via an enolate intermediate. This is 3-dehydroquinate dehydratase from Salinispora tropica (strain ATCC BAA-916 / DSM 44818 / JCM 13857 / NBRC 105044 / CNB-440).